The sequence spans 1094 residues: Protein phosphatase 2C and cyclic nucleotide-binding/kinase domain-containing protein (1094 aa).

Residues 107-397 enclose the PPM-type phosphatase domain; it reads RCSFLSQRGY…DDITIIVVHI (291 aa). Residues D148, G149, D344, and D388 each coordinate Mn(2+). A nucleoside 3',5'-cyclic phosphate contacts are provided by residues 491–616 and 617–758; these read LFRK…RSVD and LLSR…RHSS. A Protein kinase domain is found at 785–1038; it reads TTCLSTTDCS…PESIKKHPWF (254 aa). ATP contacts are provided by residues 791-799 and K811; that span reads TDCSEIGLV.

The protein in the N-terminal section; belongs to the PP2C family. In the C-terminal section; belongs to the protein kinase superfamily. AGC Ser/Thr protein kinase family. Mg(2+) serves as cofactor. The cofactor is Mn(2+).

The catalysed reaction is O-phospho-L-seryl-[protein] + H2O = L-seryl-[protein] + phosphate. It carries out the reaction O-phospho-L-threonyl-[protein] + H2O = L-threonyl-[protein] + phosphate. The protein is Protein phosphatase 2C and cyclic nucleotide-binding/kinase domain-containing protein of Arabidopsis thaliana (Mouse-ear cress).